Reading from the N-terminus, the 753-residue chain is Ion-translocating oxidoreductase complex subunit C (753 aa).

2 consecutive 4Fe-4S ferredoxin-type domains span residues 367 to 397 (EMGEPQEEKGCIRCSACADACPADLLPQQLY) and 407 to 436 (KATAHNLADCIECGACAWVCPSNIPLVQYF). Positions 377, 380, 383, 387, 416, 419, 422, and 426 each coordinate [4Fe-4S] cluster. Disordered stretches follow at residues 517 to 561 (AKPD…RKAA), 606 to 625 (RKAEQQVAPVEAPVAEPVDP), 640 to 659 (RKAEQQVAPVEAPVAEPVDP), and 705 to 735 (AKARKAEQQAAQPDLASAAANDDPRKAAVAA). A compositionally biased stretch (basic and acidic residues) spans 526–537 (AAREARKAEARA). Low complexity-rich tracts occupy residues 610-622 (QQVAPVEAPVAEP), 644-656 (QQVAPVEAPVAEP), and 712-735 (QQAAQPDLASAAANDDPRKAAVAA).

This sequence belongs to the 4Fe4S bacterial-type ferredoxin family. RnfC subfamily. As to quaternary structure, the complex is composed of six subunits: RnfA, RnfB, RnfC, RnfD, RnfE and RnfG. The cofactor is [4Fe-4S] cluster.

The protein localises to the cell inner membrane. Its function is as follows. Part of a membrane-bound complex that couples electron transfer with translocation of ions across the membrane. The sequence is that of Ion-translocating oxidoreductase complex subunit C from Klebsiella pneumoniae (strain 342).